Here is a 269-residue protein sequence, read N- to C-terminus: MGQNDLMGTAEDFADQFLRVTKQYLPHVARLCLISTFLEDGIRMWFQWSEQRDYIDTTWSCGYLLASSFVFLNLLGQLTGCVLVLSRNFVQYACFGLFGIIALQTIAYSILWDLKFLMRNLALGGGLLLLLAESRSEGKSMFAGVPTMRESSPKQYMQLGGRVLLVLMFMTLLHFDASFFSIIQNIVGTALMILVAIGFKTKLAALTLVVWLFAINVYFNAFWTIPVYKPMHDFLKYDFFQTMSVIGGLLLVVALGPGGVSMDEKKKEW.

5 helical membrane passes run L65–L85, Y92–W112, F179–F199, L203–W223, and T242–M262. Positions K266–W269 match the Di-lysine motif motif.

Belongs to the SURF4 family. Found in a complex composed at least of SURF4, TMED2 and TMED10. May interact with LMAN1. Interacts with ZFYVE27 and with KIF5A in a ZFYVE27-dependent manner. Interacts with STING1. Interacts with SAR1B. Interacts with TMEM41B.

The protein localises to the endoplasmic reticulum membrane. Its subcellular location is the endoplasmic reticulum-Golgi intermediate compartment membrane. It localises to the golgi apparatus membrane. Endoplasmic reticulum cargo receptor that mediates the export of lipoproteins by recruiting cargos into COPII vesicles to facilitate their secretion. Acts as a cargo receptor for lipoproteins bearing both APOB and APOA1, thereby regulating lipoprotein delivery and the maintenance of lipid homeostasis. Synergizes with the GTPase SAR1B to mediate transport of circulating lipoproteins. Promotes the secretion of PCSK9. Also mediates the efficient secretion of erythropoietin (EPO). May also play a role in the maintenance of the architecture of the endoplasmic reticulum-Golgi intermediate compartment and of the Golgi. This chain is Surfeit locus protein 4, found in Mus musculus (Mouse).